The primary structure comprises 408 residues: SERPINE1 mRNA-binding protein 1 (408 aa).

At S25 the chain carries Phosphoserine. 2 disordered regions span residues 33–292 and 328–408; these read AAEN…TLDE and SKSE…PALA. Low complexity predominate over residues 51–68; it reads AKSAAQAAAQTNSNAAGK. K52 carries the N6-acetyllysine; alternate modification. Residue K52 forms a Glycyl lysine isopeptide (Lys-Gly) (interchain with G-Cter in SUMO1); alternate linkage. Residue K68 is modified to N6-acetyllysine. Composition is skewed to basic and acidic residues over residues 70 to 80, 89 to 114, and 122 to 162; these read LRKESQKDRKN, VDKK…RRPD, and KIID…DRPI. A Glycyl lysine isopeptide (Lys-Gly) (interchain with G-Cter in SUMO1); alternate cross-link involves residue K102. A Glycyl lysine isopeptide (Lys-Gly) (interchain with G-Cter in SUMO2); alternate cross-link involves residue K102. Residues K122 and K140 each carry the N6-acetyllysine modification. Over residues 164-182 the composition is skewed to gly residues; it reads GRGGLGRGRGGRGRGMGRG. Residues R165 and R188 each carry the omega-N-methylarginine modification. Over residues 183–199 the composition is skewed to basic and acidic residues; sequence DGFDSRGKREFDRHSGS. S197 is modified (phosphoserine). S199 carries the post-translational modification Phosphoserine; by MTOR. S203, S205, and S208 each carry phosphoserine. At K211 the chain carries N6-acetyllysine; alternate. K211 is covalently cross-linked (Glycyl lysine isopeptide (Lys-Gly) (interchain with G-Cter in SUMO2); alternate). Residue R216 is modified to Omega-N-methylarginine. S221 carries the phosphoserine modification. Residue H222 forms a Glycyl lysine isopeptide (Lys-Gly) (interchain with G-Cter in SUMO2) linkage. Phosphothreonine; by MTOR is present on T226. K228 participates in a covalent cross-link: Glycyl lysine isopeptide (Lys-Gly) (interchain with G-Cter in SUMO1); alternate. Residue K228 forms a Glycyl lysine isopeptide (Lys-Gly) (interchain with G-Cter in SUMO2); alternate linkage. A Glycyl lysine isopeptide (Lys-Gly) (interchain with G-Cter in SUMO2) cross-link involves residue K228. Residues L231, S234, and Y237 each carry the phosphoserine modification. Residue S234 is modified to Phosphothreonine. K240 is subject to Phosphothreonine. A compositionally biased stretch (polar residues) spans 240–253; it reads KQISYNYSDLDQSN. Positions 261 to 275 are enriched in basic and acidic residues; it reads GEEHHPVADTENKEN. A Glycyl lysine isopeptide (Lys-Gly) (interchain with G-Cter in SUMO1); alternate cross-link involves residue K281. A Glycyl lysine isopeptide (Lys-Gly) (interchain with G-Cter in SUMO2); alternate cross-link involves residue K281. Basic and acidic residues-rich tracts occupy residues 282–292 and 328–342; these read EEGPKEMTLDE and SKSE…VMDH. K329 carries the post-translational modification N6-acetyllysine. S330 bears the Phosphoserine mark. Residues 363–372 show a composition bias toward gly residues; sequence GRPGRGGRGG. R364, R367, and R370 each carry omega-N-methylarginine. S392 and S394 each carry phosphoserine.

Belongs to the SERBP1-HABP4 family. In terms of assembly, associates with mature 80S ribosomes. Interacts with EEF2/eEF2; interaction sequesters EEF2/eEF2 at the A-site of the ribosome, thereby blocking the interaction sites of the mRNA-tRNA complex, promoting ribosome stabilization and hibernation. Interacts with SPIN1. Interacts with CHD3 and TDRD3. Interacts with ZDHHC17 (via ANK repeats). Post-translationally, phosphorylation by MTOR inhibits SERBP1 and relieves ribosome hibernation. In terms of tissue distribution, expressed at high level in the heart, skeletal muscle and kidney, and at low levels in placenta, liver and brain.

Its subcellular location is the cytoplasm. It localises to the nucleus. It is found in the perinuclear region. Functionally, ribosome-binding protein that promotes ribosome hibernation, a process during which ribosomes are stabilized in an inactive state and preserved from proteasomal degradation. Acts via its association with EEF2/eEF2 factor, sequestering EEF2/eEF2 at the A-site of the ribosome and promoting ribosome stabilization and storage in an inactive state. May also play a role in the regulation of mRNA stability: binds to the 3'-most 134 nt of the SERPINE1/PAI1 mRNA, a region which confers cyclic nucleotide regulation of message decay. Seems to play a role in PML-nuclear bodies formation. This is SERPINE1 mRNA-binding protein 1 from Homo sapiens (Human).